Reading from the N-terminus, the 161-residue chain is RNA pyrophosphohydrolase (161 aa).

Positions 12 to 154 constitute a Nudix hydrolase domain; the sequence is PYRPGVGMMI…KRKLYQAVVK (143 aa). The Nudix box signature appears at 46 to 67; sequence GGIVPGETPSIAAMREMLEEIG.

Belongs to the Nudix hydrolase family. RppH subfamily. Requires a divalent metal cation as cofactor.

Accelerates the degradation of transcripts by removing pyrophosphate from the 5'-end of triphosphorylated RNA, leading to a more labile monophosphorylated state that can stimulate subsequent ribonuclease cleavage. This chain is RNA pyrophosphohydrolase, found in Rickettsia conorii (strain ATCC VR-613 / Malish 7).